Consider the following 300-residue polypeptide: Porphobilinogen deaminase (300 aa).

Cysteine 242 bears the S-(dipyrrolylmethanemethyl)cysteine mark.

This sequence belongs to the HMBS family. Monomer. It depends on dipyrromethane as a cofactor.

The catalysed reaction is 4 porphobilinogen + H2O = hydroxymethylbilane + 4 NH4(+). The protein operates within porphyrin-containing compound metabolism; protoporphyrin-IX biosynthesis; coproporphyrinogen-III from 5-aminolevulinate: step 2/4. Tetrapolymerization of the monopyrrole PBG into the hydroxymethylbilane pre-uroporphyrinogen in several discrete steps. The polypeptide is Porphobilinogen deaminase (Blochmanniella pennsylvanica (strain BPEN)).